The sequence spans 123 residues: uncharacterized protein (123 aa).

A disordered region spans residues 76–97 (ENNKRKKKSEGERVRSPRTFRG).

This is an uncharacterized protein from Saccharomyces cerevisiae (strain ATCC 204508 / S288c) (Baker's yeast).